We begin with the raw amino-acid sequence, 574 residues long: Sentrin-specific protease 3 (574 aa).

The segment at 1-125 (MKETIQGTGS…PTHRKTCSQR (125 aa)) is disordered. Phosphoserine occurs at positions 54, 73, and 75. Positions 74-93 (ASEEEEEEEEEEDEDEEEEV) are enriched in acidic residues. The span at 112-125 (RPSRPTHRKTCSQR) shows a compositional bias: basic residues. 2 consecutive short sequence motifs (nuclear localization signal) follow at residues 125 to 128 (RRRR) and 153 to 159 (RHRGRRR). Positions 161–181 (LAHPKNHLSPQQGGATPQVPS) are disordered. At S169 the chain carries Phosphoserine. Position 176 is a phosphothreonine (T176). Residues S181, S188, S212, and S232 each carry the phosphoserine modification. The segment at 386-543 (HVLTMDDLGT…AFVLQYCKHL (158 aa)) is protease. Residues H465 and D482 contribute to the active site. Catalysis depends on C532, which acts as the Nucleophile.

This sequence belongs to the peptidase C48 family. Component of some MLL1/MLL complex, at least composed of the core components KMT2A/MLL1, ASH2L, HCFC1/HCF1, WDR5 and RBBP5, as well as the facultative components BACC1, CHD8, E2F6, HSP70, INO80C, KANSL1, LAS1L, MAX, MCRS1, MGA, MYST1/MOF, PELP1, PHF20, PRP31, RING2, RUVB1/TIP49A, RUVB2/TIP49B, SENP3, TAF1, TAF4, TAF6, TAF7, TAF9 and TEX10. Interacts with EP300, NPM1 and CDCA8. Component of the 5FMC complex, at least composed of PELP1, LAS1L, TEX10, WDR18 and SENP3; the complex interacts with methylated CHTOP and ZNF148. Interacts with NOL9. Interacts with CCAR2.

Its subcellular location is the nucleus. The protein localises to the nucleolus. It localises to the nucleoplasm. It is found in the cytoplasm. Its activity is regulated as follows. On oxidative stress, SENP3 degradation is blocked by inhibition of its ubiquitination, which stabilizes it as it accumulates in the nucleoplasm. Functionally, protease that releases SUMO2 and SUMO3 monomers from sumoylated substrates, but has only weak activity against SUMO1 conjugates. Deconjugates SUMO2 from MEF2D, which increases its transcriptional activation capability. Deconjugates SUMO2 and SUMO3 from CDCA8. Redox sensor that, when redistributed into nucleoplasm, can act as an effector to enhance HIF1A transcriptional activity by desumoylating EP300. Required for rRNA processing through deconjugation of SUMO2 and SUMO3 from nucleophosmin, NPM1. Plays a role in the regulation of sumoylation status of ZNF148. Functions as a component of the Five Friends of Methylated CHTOP (5FMC) complex; the 5FMC complex is recruited to ZNF148 by methylated CHTOP, leading to desumoylation of ZNF148 and subsequent transactivation of ZNF148 target genes. Deconjugates SUMO2 from KAT5. Catalyzes desumoylation of MRE11. This Homo sapiens (Human) protein is Sentrin-specific protease 3.